The chain runs to 537 residues: Actin-histidine N-methyltransferase (537 aa).

Positions 1–12 (MGKNTKRNKKTK) are enriched in basic residues. Residues 1-50 (MGKNTKRNKKTKQQQQQPQQNGVTASASGTAVEDFEDQQAASSLPSLNGK) are disordered. S-adenosyl-L-methionine contacts are provided by residues Arg-114, 143–145 (YQL), Arg-299, 325–329 (DMANH), and 375–377 (NGF). The SET domain occupies 133 to 364 (EGLEIAIFPG…TGEQFFIYYG (232 aa)).

Belongs to the class V-like SAM-binding methyltransferase superfamily. SETD3 actin-histidine methyltransferase family.

The protein resides in the cytoplasm. The protein localises to the nucleus. It catalyses the reaction L-histidyl-[protein] + S-adenosyl-L-methionine = N(tele)-methyl-L-histidyl-[protein] + S-adenosyl-L-homocysteine + H(+). Protein-histidine N-methyltransferase that specifically mediates 3-methylhistidine (tele-methylhistidine) methylation of actin at 'His-74'. In Drosophila melanogaster (Fruit fly), this protein is Actin-histidine N-methyltransferase.